We begin with the raw amino-acid sequence, 570 residues long: Acetolactate synthase (570 aa).

Thiamine diphosphate is bound at residue glutamate 60. FAD-binding positions include glutamine 162, 266 to 287, and 308 to 327; these read FRNQPGDLLLEQADVVLTIGYD and DEIIADIDHAYQPDLELIGD. A thiamine pyrophosphate binding region spans residues 399–479; that stretch reads SHAIWMSRYF…IVHIVWNDST (81 aa). A Mg(2+)-binding site is contributed by aspartate 450.

Belongs to the TPP enzyme family. The cofactor is Mg(2+). Requires thiamine diphosphate as cofactor.

The catalysed reaction is 2 pyruvate + H(+) = (2S)-2-acetolactate + CO2. It functions in the pathway polyol metabolism; (R,R)-butane-2,3-diol biosynthesis; (R,R)-butane-2,3-diol from pyruvate: step 1/3. The sequence is that of Acetolactate synthase (alsS) from Bacillus subtilis (strain 168).